We begin with the raw amino-acid sequence, 315 residues long: Aspartate carbamoyltransferase catalytic subunit (315 aa).

Arginine 61 and threonine 62 together coordinate carbamoyl phosphate. Lysine 90 is a binding site for L-aspartate. Positions 111, 139, and 142 each coordinate carbamoyl phosphate. L-aspartate is bound by residues arginine 172 and arginine 234. Residues leucine 274 and proline 275 each contribute to the carbamoyl phosphate site.

The protein belongs to the aspartate/ornithine carbamoyltransferase superfamily. ATCase family. In terms of assembly, heterooligomer of catalytic and regulatory chains.

The enzyme catalyses carbamoyl phosphate + L-aspartate = N-carbamoyl-L-aspartate + phosphate + H(+). The protein operates within pyrimidine metabolism; UMP biosynthesis via de novo pathway; (S)-dihydroorotate from bicarbonate: step 2/3. Its function is as follows. Catalyzes the condensation of carbamoyl phosphate and aspartate to form carbamoyl aspartate and inorganic phosphate, the committed step in the de novo pyrimidine nucleotide biosynthesis pathway. This chain is Aspartate carbamoyltransferase catalytic subunit, found in Hyperthermus butylicus (strain DSM 5456 / JCM 9403 / PLM1-5).